We begin with the raw amino-acid sequence, 378 residues long: C-C chemokine receptor type 7 (378 aa).

A signal peptide spans 1 to 24; that stretch reads MDLGKPMKSVLVVALLVIFQVCLC. Topologically, residues 25-59 are extracellular; it reads QDEVTDDYIGDNTTVDYTLFESLCSKKDVRNFKAW. N-linked (GlcNAc...) asparagine glycosylation is present at N36. The chain crosses the membrane as a helical span at residues 60-86; the sequence is FLPIMYSIICFVGLLGNGLVVLTYIYF. Residues 87–95 lie on the Cytoplasmic side of the membrane; that stretch reads KRLKTMTDT. Residues 96 to 116 form a helical membrane-spanning segment; it reads YLLNLAVADILFLLTLPFWAY. Over 117–130 the chain is Extracellular; that stretch reads SAAKSWVFGVHFCK. Residues C129 and C210 are joined by a disulfide bond. A helical membrane pass occupies residues 131 to 152; the sequence is LIFAIYKMSFFSGMLLLLCISI. Topologically, residues 153–170 are cytoplasmic; that stretch reads DRYVAIVQAVSAHRHRAR. Residues 171–191 traverse the membrane as a helical segment; the sequence is VLLISKLSCVGIWILATVLSI. Residues 192–219 lie on the Extracellular side of the membrane; that stretch reads PELLYSDLQRSSSEQAMRCSLITEHVEA. The helical transmembrane segment at 220–247 threads the bilayer; the sequence is FITIQVAQMVIGFLVPLLAMSFCYLVII. The Cytoplasmic portion of the chain corresponds to 248 to 263; it reads RTLLQARNFERNKAIK. The chain crosses the membrane as a helical span at residues 264-289; sequence VIIAVVVVFIVFQLPYNGVVLAQTVA. Residues 290-313 are Extracellular-facing; that stretch reads NFNITSSTCELSKQLNIAYDVTYS. Residues 314-331 traverse the membrane as a helical segment; sequence LACVRCCVNPFLYAFIGV. Residues 332-378 lie on the Cytoplasmic side of the membrane; sequence KFRNDLFKLFKDLGCLSQEQLRQWSSCRHIRRSSMSVEAETTTTFSP.

It belongs to the G-protein coupled receptor 1 family. Expressed in various lymphoid tissues and activated B- and T-lymphocytes, strongly up-regulated in B-cells infected with Epstein-Barr virus and T-cells infected with herpesvirus 6 or 7.

Its subcellular location is the cell membrane. Receptor for the MIP-3-beta chemokine. Probable mediator of EBV effects on B-lymphocytes or of normal lymphocyte functions. This is C-C chemokine receptor type 7 (CCR7) from Homo sapiens (Human).